A 594-amino-acid polypeptide reads, in one-letter code: (E)-beta-ocimene synthase TPS6FN (594 aa).

(2E)-geranyl diphosphate contacts are provided by Arg-303, Asp-340, Asp-344, Arg-489, and Asn-492. Residues Asp-340 and Asp-344 each coordinate Mg(2+). The DDXXD motif signature appears at Asp-340–Asp-344. Positions 492, 496, and 500 each coordinate Mg(2+).

The protein belongs to the terpene synthase family. Tpsb subfamily. The cofactor is Mg(2+). Mn(2+) is required as a cofactor. Expressed in glandular trichomes two to four weeks after flowering onset.

It carries out the reaction (2E)-geranyl diphosphate = (E)-beta-ocimene + diphosphate. The catalysed reaction is (2E)-geranyl diphosphate = (Z)-beta-ocimene + diphosphate. It functions in the pathway secondary metabolite biosynthesis; terpenoid biosynthesis. In terms of biological role, involved in monoterpene (C10) olefins biosynthesis, constituants of cannabinoids and terpenoids-rich resins. Catalyzes mainly the conversion of (2E)-geranyl diphosphate to (E)-beta-ocimene, and also produces minor products such as (Z)-beta-ocimene. In Cannabis sativa (Hemp), this protein is (E)-beta-ocimene synthase TPS6FN.